We begin with the raw amino-acid sequence, 739 residues long: Phosphoribosylformylglycinamidine synthase subunit PurL (739 aa).

The active site involves H52. The ATP site is built by Y55 and K94. E96 lines the Mg(2+) pocket. Substrate-binding positions include 97–100 and R119; that span reads SHNH. H98 functions as the Proton acceptor in the catalytic mechanism. D120 contributes to the Mg(2+) binding site. Q243 is a substrate binding site. Residue D271 coordinates Mg(2+). 315 to 317 lines the substrate pocket; it reads ESQ. D498 and G535 together coordinate ATP. A Mg(2+)-binding site is contributed by N536. A substrate-binding site is contributed by S538.

This sequence belongs to the FGAMS family. In terms of assembly, monomer. Part of the FGAM synthase complex composed of 1 PurL, 1 PurQ and 2 PurS subunits.

Its subcellular location is the cytoplasm. The catalysed reaction is N(2)-formyl-N(1)-(5-phospho-beta-D-ribosyl)glycinamide + L-glutamine + ATP + H2O = 2-formamido-N(1)-(5-O-phospho-beta-D-ribosyl)acetamidine + L-glutamate + ADP + phosphate + H(+). Its pathway is purine metabolism; IMP biosynthesis via de novo pathway; 5-amino-1-(5-phospho-D-ribosyl)imidazole from N(2)-formyl-N(1)-(5-phospho-D-ribosyl)glycinamide: step 1/2. In terms of biological role, part of the phosphoribosylformylglycinamidine synthase complex involved in the purines biosynthetic pathway. Catalyzes the ATP-dependent conversion of formylglycinamide ribonucleotide (FGAR) and glutamine to yield formylglycinamidine ribonucleotide (FGAM) and glutamate. The FGAM synthase complex is composed of three subunits. PurQ produces an ammonia molecule by converting glutamine to glutamate. PurL transfers the ammonia molecule to FGAR to form FGAM in an ATP-dependent manner. PurS interacts with PurQ and PurL and is thought to assist in the transfer of the ammonia molecule from PurQ to PurL. The polypeptide is Phosphoribosylformylglycinamidine synthase subunit PurL (Caulobacter vibrioides (strain ATCC 19089 / CIP 103742 / CB 15) (Caulobacter crescentus)).